Here is a 74-residue protein sequence, read N- to C-terminus: UPF0352 protein PM1884 (74 aa).

Belongs to the UPF0352 family.

In Pasteurella multocida (strain Pm70), this protein is UPF0352 protein PM1884.